The following is a 582-amino-acid chain: 2-isopropylmalate synthase (582 aa).

The 275-residue stretch at 40–314 folds into the Pyruvate carboxyltransferase domain; sequence PRWCAVDLRD…DPMIDFSDID (275 aa). Positions 49, 253, 255, and 289 each coordinate Mg(2+). Residues 456 to 582 form a regulatory domain region; it reads SPAGHPGGQW…NRAIRDNQVD (127 aa).

It belongs to the alpha-IPM synthase/homocitrate synthase family. LeuA type 2 subfamily. As to quaternary structure, homodimer. Mg(2+) serves as cofactor.

It is found in the cytoplasm. The catalysed reaction is 3-methyl-2-oxobutanoate + acetyl-CoA + H2O = (2S)-2-isopropylmalate + CoA + H(+). The protein operates within amino-acid biosynthesis; L-leucine biosynthesis; L-leucine from 3-methyl-2-oxobutanoate: step 1/4. In terms of biological role, catalyzes the condensation of the acetyl group of acetyl-CoA with 3-methyl-2-oxobutanoate (2-ketoisovalerate) to form 3-carboxy-3-hydroxy-4-methylpentanoate (2-isopropylmalate). The sequence is that of 2-isopropylmalate synthase from Renibacterium salmoninarum (strain ATCC 33209 / DSM 20767 / JCM 11484 / NBRC 15589 / NCIMB 2235).